Consider the following 157-residue polypeptide: Ribosome maturation factor RimP (157 aa).

Belongs to the RimP family.

It is found in the cytoplasm. Required for maturation of 30S ribosomal subunits. The protein is Ribosome maturation factor RimP of Thermus thermophilus (strain ATCC BAA-163 / DSM 7039 / HB27).